The following is a 389-amino-acid chain: Zip homologous protein 3 (389 aa).

The RING-type zinc finger occupies 6-43 (CNKCFNRKPPDGFFISSCFHIFCTKCAKADLAVCLICK). The stretch at 123-164 (LAEATAWIQMAEKKLQASEEERVKAEREIEECQAKLKSMTNL) forms a coiled coil. The segment at 366-389 (ISSQPGYLAQRKPINGRSFIGPAD) is disordered.

In terms of assembly, interacts with zhp-4; the interaction is required for their localization along paired chromosomes and stability, and for the formation of chiasma during meiotic recombination. In terms of tissue distribution, expressed througout the gonad (at protein level). Expressed in the germline.

It localises to the chromosome. Recruited co-dependently with zhp-4 to the synaptonemal complex between homologous chromosome pairs to regulate the formation and number of crossover events between homologs during meiotic recombination. In the early stages of pachytene, in complex with zhp-4, recruited by the zhp-1-zhp-2 heterodimer to designated crossover sites along the homolog pair to stabilize other pro-crossover factors such as rmh-1, msh-5 and cosa-1. This in turn facilitates crossover and promotes the formation of chiasma in each meiotic nucleus at the late pachytene stage of meiosis. Plays a role in the segregation of homologous chromosomes following the completion of crossovers. Together with him-14 and msh-5 plays a role in the activation of DNA damage-dependent apoptosis at the DNA damage checkpoint in pachytene cells. The chain is Zip homologous protein 3 from Caenorhabditis elegans.